Reading from the N-terminus, the 347-residue chain is Syntaxin-32 (347 aa).

At Met-1–Arg-325 the chain is on the cytoplasmic side. 2 disordered regions span residues His-172–Phe-191 and Pro-208–Val-251. Composition is skewed to polar residues over residues Gln-177–Phe-191 and Asn-213–Leu-222. Over residues Gln-237–Gln-249 the composition is skewed to low complexity. The 63-residue stretch at Asp-255–Tyr-317 folds into the t-SNARE coiled-coil homology domain. A helical; Anchor for type IV membrane protein membrane pass occupies residues Trp-326–Val-346. Residue Ala-347 is a topological domain, vesicular.

This sequence belongs to the syntaxin family. Part of the t-SNARE complex.

It is found in the golgi apparatus. It localises to the cis-Golgi network membrane. Its function is as follows. Vesicle trafficking protein that functions in the secretory pathway. The polypeptide is Syntaxin-32 (SYP32) (Arabidopsis thaliana (Mouse-ear cress)).